A 201-amino-acid polypeptide reads, in one-letter code: Recombination protein RecR (201 aa).

The C4-type zinc-finger motif lies at 60 to 75; the sequence is CSVCGNIDTTDPCSIC. One can recognise a Toprim domain in the interval 83–178; sequence GTIIVVEDIS…KITRLAHGVP (96 aa).

Belongs to the RecR family.

In terms of biological role, may play a role in DNA repair. It seems to be involved in an RecBC-independent recombinational process of DNA repair. It may act with RecF and RecO. The sequence is that of Recombination protein RecR from Bartonella bacilliformis (strain ATCC 35685 / KC583 / Herrer 020/F12,63).